A 949-amino-acid polypeptide reads, in one-letter code: Leucine--tRNA ligase (949 aa).

The 'HIGH' region signature appears at 68–79 (PYPSGEGLHVGH). Positions 540–562 (VPDYSPVSFDPDDAGSEPSPPLG) are disordered. Residues 722 to 726 (KIGKS) carry the 'KMSKS' region motif. Lysine 725 serves as a coordination point for ATP.

This sequence belongs to the class-I aminoacyl-tRNA synthetase family.

The protein resides in the cytoplasm. The enzyme catalyses tRNA(Leu) + L-leucine + ATP = L-leucyl-tRNA(Leu) + AMP + diphosphate. The polypeptide is Leucine--tRNA ligase (Mycolicibacterium gilvum (strain PYR-GCK) (Mycobacterium gilvum (strain PYR-GCK))).